Here is a 259-residue protein sequence, read N- to C-terminus: Protein TILLER ANGLE CONTROL 1 (259 aa).

An IGT motif motif is present at residues 56 to 62 (GILAIGT). Disordered stretches follow at residues 96 to 123 (EEKA…AKMH), 206 to 226 (SCME…PLKA), and 239 to 259 (GKKI…PVTA). Residues 109–119 (APSEPASALEP) show a composition bias toward low complexity.

Belongs to the TAC family. Expressed in the basal part of seedlings.

Involved in the regulation of tiller growth angle. Promotes horizontal shoot growth. TAC1 and LAZY1 play opposite functions in the regulation of tiller growth angle. The sequence is that of Protein TILLER ANGLE CONTROL 1 from Oryza sativa subsp. indica (Rice).